The sequence spans 201 residues: Recombination protein RecR (201 aa).

The C4-type zinc finger occupies 57-72; the sequence is CECCRTLTEEPLCRIC. Positions 81-176 constitute a Toprim domain; that stretch reads GVLCIVETPA…NTTRIAHGVP (96 aa).

Belongs to the RecR family.

In terms of biological role, may play a role in DNA repair. It seems to be involved in an RecBC-independent recombinational process of DNA repair. It may act with RecF and RecO. This chain is Recombination protein RecR, found in Idiomarina loihiensis (strain ATCC BAA-735 / DSM 15497 / L2-TR).